Reading from the N-terminus, the 116-residue chain is Ly-6/neurotoxin-like protein 1 (116 aa).

The first 20 residues, 1–20, serve as a signal peptide directing secretion; it reads MTPLLTLILVVLMGLPLAQA. Positions 21–107 constitute a UPAR/Ly6 domain; it reads LDCHVCAYNG…TPATLALAPI (87 aa). 5 cysteine pairs are disulfide-bonded: C23–C46, C26–C33, C39–C64, C68–C85, and C86–C91. C91 is lipidated: GPI-anchor amidated cysteine. Positions 92–116 are cleaved as a propeptide — removed in mature form; sequence NGTGLATPATLALAPILLATLWGLL.

As to quaternary structure, interacts with nAChRs containing alpha-4:beta-2 (CHRNA4:CHRNB2) and alpha-7 (CHRNA7) subunits. Interacts with CHRNA4 probably in the endoplasmic reticulum prior to nAChR pentameric assembly. Interacts with KCNA2/Potassium voltage-gated channel subfamily A member 2.

Its subcellular location is the cell membrane. It localises to the cell projection. The protein localises to the dendrite. It is found in the endoplasmic reticulum. In terms of biological role, acts in different tissues through interaction to nicotinic acetylcholine receptors (nAChRs). The proposed role as modulator of nAChR activity seems to be dependent on the nAChR subtype and stoichiometry, and to involve an effect on nAChR trafficking and its cell surface expression, and on single channel properties of the nAChR inserted in the plasma membrane. Modulates functional properties of nicotinic acetylcholine receptors (nAChRs) to prevent excessive excitation, and hence neurodegeneration. Enhances desensitization by increasing both the rate and extent of desensitization of alpha-4:beta-2-containing nAChRs and slowing recovery from desensitization. Promotes large amplitude ACh-evoked currents through alpha-4:beta-2 nAChRs. Is involved in regulation of the nAChR pentameric assembly in the endoplasmic reticulum. Shifts stoichiometry from high sensitivity alpha-4(2):beta-2(3) to low sensitivity alpha-4(3):beta-2(2) nAChR. In vitro modulates alpha-3:beta-4-containing nAChRs. Reduces cell surface expression of (alpha-3:beta-4)(2):beta-4 and (alpha-3:beta-4)(2):alpha-5 nAChRs suggesting an interaction with nAChR alpha-3(-):(+)beta-4 subunit interfaces and an allosteric mode. Corresponding single channel effects characterized by decreased unitary conductance, altered burst proportions and enhanced desensitization/inactivation seem to depend on nAChR alpha:alpha subunit interfaces and are greater in (alpha-3:beta-2)(2):alpha-3 when compared to (alpha-3:beta-2)(2):alpha-5 nAChRs. Prevents plasticity in the primary visual cortex late in life. The chain is Ly-6/neurotoxin-like protein 1 from Homo sapiens (Human).